We begin with the raw amino-acid sequence, 191 residues long: GDP-mannose pyrophosphatase (191 aa).

Residues tyrosine 17, 38–40, arginine 67, and 85–87 each bind GDP-alpha-D-mannose; these read KRE and AGL. Positions 43-180 constitute a Nudix hydrolase domain; that stretch reads DRGNGATILL…EIRDGKTVLL (138 aa). 3 residues coordinate Mg(2+): alanine 85, glutamate 100, and glutamate 104. Positions 86–106 match the Nudix box motif; sequence GLLDNDEPEVCIRKEAIEETG. Residues glutamate 104, glutamate 127, 150–151, and lysine 176 contribute to the GDP-alpha-D-mannose site; that span reads DE. Glutamate 151 lines the Mg(2+) pocket.

The protein belongs to the Nudix hydrolase family. NudK subfamily. In terms of assembly, homodimer. Requires Mg(2+) as cofactor.

The enzyme catalyses GDP-alpha-D-mannose + H2O = alpha-D-mannose 1-phosphate + GMP + 2 H(+). Its function is as follows. Nucleoside diphosphate sugar hydrolase that hydrolyzes GDP-mannose as its preferred substrate, yielding GMP and mannose-1-phosphate. In Shigella boydii serotype 4 (strain Sb227), this protein is GDP-mannose pyrophosphatase (nudK).